Here is a 478-residue protein sequence, read N- to C-terminus: Lysosome membrane protein 2 (478 aa).

At 1–4 (MGRC) the chain is on the cytoplasmic side. Residues 5–27 (CFYTAGTLSLLLLVTSVTLLVAR) traverse the membrane as a helical segment. The Lumenal portion of the chain corresponds to 28-433 (VFQKAVDQSI…RLKSMINTTL (406 aa)). 3 N-linked (GlcNAc...) asparagine glycosylation sites follow: Asn-45, Asn-68, and Asn-105. The important for interaction with GBA1 stretch occupies residues 155–191 (IIEAMLKAYQQKLFVTHTVDELLWGYKDEILSLIHVF). Asn-206, Asn-224, Asn-249, and Asn-304 each carry an N-linked (GlcNAc...) asparagine glycan. 2 disulfides stabilise this stretch: Cys-274-Cys-329 and Cys-312-Cys-318. N-linked (GlcNAc...) asparagine glycosylation is found at Asn-325, Asn-412, and Asn-430. A helical membrane pass occupies residues 434–459 (IITNIPYIIMALGVFFGLVFTWLACK). At 460 to 478 (GQGSMDEGTADERAPLIRT) the chain is on the cytoplasmic side.

This sequence belongs to the CD36 family. Interacts with GBA1. As to quaternary structure, (Microbial infection) Interacts with enterovirus 71 capsid proteins VP1 and VP2.

Its subcellular location is the lysosome membrane. Its function is as follows. Acts as a lysosomal receptor for glucosylceramidase (GBA1) targeting. Functionally, (Microbial infection) Acts as a receptor for enterovirus 71. The polypeptide is Lysosome membrane protein 2 (SCARB2) (Homo sapiens (Human)).